A 1235-amino-acid polypeptide reads, in one-letter code: ATP-dependent helicase/nuclease subunit A (1235 aa).

A UvrD-like helicase ATP-binding domain is found at 12–482; it reads SLWTDDQWKA…IDLSQNFRSR (471 aa). An ATP-binding site is contributed by 33 to 40; that stretch reads AAAGSGKT. The UvrD-like helicase C-terminal domain occupies 509–800; that stretch reads AAELTLGASF…RMMTIHASKG (292 aa).

Belongs to the helicase family. AddA subfamily. As to quaternary structure, heterodimer of AddA and AddB/RexB. The cofactor is Mg(2+).

The enzyme catalyses Couples ATP hydrolysis with the unwinding of duplex DNA by translocating in the 3'-5' direction.. It carries out the reaction ATP + H2O = ADP + phosphate + H(+). The heterodimer acts as both an ATP-dependent DNA helicase and an ATP-dependent, dual-direction single-stranded exonuclease. Recognizes the chi site generating a DNA molecule suitable for the initiation of homologous recombination. The AddA nuclease domain is required for chi fragment generation; this subunit has the helicase and 3' -&gt; 5' nuclease activities. This Listeria monocytogenes serotype 4b (strain F2365) protein is ATP-dependent helicase/nuclease subunit A.